A 365-amino-acid polypeptide reads, in one-letter code: Solute carrier family 35 member G1 (365 aa).

A disordered region spans residues Met-1–Ala-33. The span at Ala-23–Ala-33 shows a compositional bias: low complexity. 10 helical membrane-spanning segments follow: residues Gly-69–Val-89, Ala-97–Ile-117, Ile-131–Tyr-151, Leu-156–Ile-176, Ala-187–Phe-207, Leu-222–Leu-242, Phe-252–Val-272, Leu-286–Leu-306, Ala-311–Phe-333, and Thr-338–Ile-357. 2 EamA domains span residues Phe-80–Arg-202 and Val-233–Ile-357.

It belongs to the TMEM20 family. As to quaternary structure, interacts with STIM1; stimulated by depletion of intracellular calcium. Interacts with ORAI1. Interacts with the plasma membrane calcium-transporting ATPases ATP2B1 and ATP2B4. Interacts with ATP1A1, ATP2A2, KPNB1 and XPO1. In terms of tissue distribution, ubiquitously expressed.

Its subcellular location is the cell membrane. It localises to the endoplasmic reticulum membrane. In terms of biological role, may play a role in intracellular calcium sensing and homeostasis. May act as a negative regulator of plasma membrane calcium-transporting ATPases preventing calcium efflux from the cell. The sequence is that of Solute carrier family 35 member G1 (SLC35G1) from Homo sapiens (Human).